The primary structure comprises 213 residues: MTDFRQDFLKFSLAQNVLKFGEFTTKAGRRSPYFFNAGLFNDGASTLQLAKFYAQSIIESGIRFDMLFGPAYKGIILAAATAMMLAEKGVNVPFAYNRKEAKDRGEGGVLVGAPLKGRVLIIDDVISAGTSVRESIKLIEAEGATPAGVAIALDRMEKGTGELSAVQEVEKQYGLPVAPIASLNDLFILLQNNPEFGQFLEPVRTYRRQYGVE.

Lys-26 is a 5-phospho-alpha-D-ribose 1-diphosphate binding site. 34-35 is an orotate binding site; sequence FF. Residues 72 to 73, Arg-98, Lys-99, Lys-102, and 123 to 131 each bind 5-phospho-alpha-D-ribose 1-diphosphate; these read YK and DDVISAGTS. Orotate is bound by residues Ser-127 and Arg-155.

This sequence belongs to the purine/pyrimidine phosphoribosyltransferase family. PyrE subfamily. In terms of assembly, homodimer. Requires Mg(2+) as cofactor.

It carries out the reaction orotidine 5'-phosphate + diphosphate = orotate + 5-phospho-alpha-D-ribose 1-diphosphate. Its pathway is pyrimidine metabolism; UMP biosynthesis via de novo pathway; UMP from orotate: step 1/2. Functionally, catalyzes the transfer of a ribosyl phosphate group from 5-phosphoribose 1-diphosphate to orotate, leading to the formation of orotidine monophosphate (OMP). The chain is Orotate phosphoribosyltransferase from Neisseria gonorrhoeae (strain NCCP11945).